We begin with the raw amino-acid sequence, 490 residues long: Lysine--tRNA ligase (490 aa).

Mg(2+) contacts are provided by Glu-400 and Glu-407.

It belongs to the class-II aminoacyl-tRNA synthetase family. Homodimer. The cofactor is Mg(2+).

It localises to the cytoplasm. The catalysed reaction is tRNA(Lys) + L-lysine + ATP = L-lysyl-tRNA(Lys) + AMP + diphosphate. The sequence is that of Lysine--tRNA ligase (lysS) from Mycoplasma genitalium (strain ATCC 33530 / DSM 19775 / NCTC 10195 / G37) (Mycoplasmoides genitalium).